We begin with the raw amino-acid sequence, 262 residues long: Phosphoribosylformylglycinamidine synthase subunit PurQ (262 aa).

The 237-residue stretch at 2–238 (RIAVIQFPGT…FAWQLPRKHP (237 aa)) folds into the Glutamine amidotransferase type-1 domain. The active-site Nucleophile is Cys-87. Catalysis depends on residues His-223 and Glu-225.

Part of the FGAM synthase complex composed of 1 PurL, 1 PurQ and 2 PurS subunits.

It localises to the cytoplasm. The catalysed reaction is N(2)-formyl-N(1)-(5-phospho-beta-D-ribosyl)glycinamide + L-glutamine + ATP + H2O = 2-formamido-N(1)-(5-O-phospho-beta-D-ribosyl)acetamidine + L-glutamate + ADP + phosphate + H(+). It catalyses the reaction L-glutamine + H2O = L-glutamate + NH4(+). It participates in purine metabolism; IMP biosynthesis via de novo pathway; 5-amino-1-(5-phospho-D-ribosyl)imidazole from N(2)-formyl-N(1)-(5-phospho-D-ribosyl)glycinamide: step 1/2. Functionally, part of the phosphoribosylformylglycinamidine synthase complex involved in the purines biosynthetic pathway. Catalyzes the ATP-dependent conversion of formylglycinamide ribonucleotide (FGAR) and glutamine to yield formylglycinamidine ribonucleotide (FGAM) and glutamate. The FGAM synthase complex is composed of three subunits. PurQ produces an ammonia molecule by converting glutamine to glutamate. PurL transfers the ammonia molecule to FGAR to form FGAM in an ATP-dependent manner. PurS interacts with PurQ and PurL and is thought to assist in the transfer of the ammonia molecule from PurQ to PurL. In Methanothrix thermoacetophila (strain DSM 6194 / JCM 14653 / NBRC 101360 / PT) (Methanosaeta thermophila), this protein is Phosphoribosylformylglycinamidine synthase subunit PurQ.